The primary structure comprises 403 residues: S-adenosylmethionine synthase (403 aa).

Position 15 (histidine 15) interacts with ATP. Residue aspartate 17 participates in Mg(2+) binding. Glutamate 43 provides a ligand contact to K(+). 2 residues coordinate L-methionine: glutamate 56 and glutamine 99. The segment at 99–109 is flexible loop; that stretch reads QSPDINQGVDR. Residues 166–168, 232–233, aspartate 241, 247–248, alanine 264, and lysine 268 contribute to the ATP site; these read DAK, KF, and RK. Aspartate 241 provides a ligand contact to L-methionine. Lysine 272 provides a ligand contact to L-methionine.

It belongs to the AdoMet synthase family. As to quaternary structure, homotetramer; dimer of dimers. Mg(2+) is required as a cofactor. It depends on K(+) as a cofactor.

The protein localises to the cytoplasm. The enzyme catalyses L-methionine + ATP + H2O = S-adenosyl-L-methionine + phosphate + diphosphate. The protein operates within amino-acid biosynthesis; S-adenosyl-L-methionine biosynthesis; S-adenosyl-L-methionine from L-methionine: step 1/1. In terms of biological role, catalyzes the formation of S-adenosylmethionine (AdoMet) from methionine and ATP. The overall synthetic reaction is composed of two sequential steps, AdoMet formation and the subsequent tripolyphosphate hydrolysis which occurs prior to release of AdoMet from the enzyme. The protein is S-adenosylmethionine synthase of Xanthomonas campestris pv. campestris (strain 8004).